The primary structure comprises 128 residues: 14 kDa zinc-binding protein (128 aa).

The 111-residue stretch at 18–128 (IFDKIIKKEI…GGRQMNWPPG (111 aa)) folds into the HIT domain. The Histidine triad motif motif lies at 112–116 (HIHVH).

In terms of assembly, homodimer.

The polypeptide is 14 kDa zinc-binding protein (ZBP14) (Zea mays (Maize)).